The following is a 293-amino-acid chain: Elongation factor Ts (293 aa).

Positions 81 to 84 (TDFV) are involved in Mg(2+) ion dislocation from EF-Tu.

Belongs to the EF-Ts family.

The protein resides in the cytoplasm. Associates with the EF-Tu.GDP complex and induces the exchange of GDP to GTP. It remains bound to the aminoacyl-tRNA.EF-Tu.GTP complex up to the GTP hydrolysis stage on the ribosome. The sequence is that of Elongation factor Ts from Thioalkalivibrio sulfidiphilus (strain HL-EbGR7).